Consider the following 869-residue polypeptide: Speckle targeted PIP5K1A-regulated poly(A) polymerase (869 aa).

The Matrin-type zinc finger occupies 16–46 (FRCCLCDVTTANRPSLDAHLKGRKHRDLVQL). The RRM domain occupies 56-128 (RSVFVSGFPR…HGLRVRPREQ (73 aa)). The segment at 114-144 (HSLGGHGLRVRPREQKEFQSPASKSPKGVDS) is disordered. Position 205 (Ser-205) interacts with ATP. Residues Asp-216 and Asp-218 each coordinate Mg(2+). Residues Asp-216 and Asp-218 each contribute to the UTP site. Disordered stretches follow at residues 226–247 (MEETEPDPKAPKVPETSSLDSA) and 259–335 (CTPA…ASKD). 2 stretches are compositionally biased toward polar residues: residues 266–276 (DSLSPTSVQES) and 283–299 (TPSSLAPQTPDSALGSD). Over residues 314–335 (QEDRKEGKQGKELELAEEASKD) the composition is skewed to basic and acidic residues. Asn-395 contributes to the ATP binding site. Positions 395, 417, 435, and 552 each coordinate UTP. The PAP-associated domain maps to 494–552 (LSSLLAQFFSCVSCLDLSGSLLSLREGRPLMVAEGLPSDLWEGLRLGPMNLQDPFDLSH). The KA1; binds the bulging loops of U6 snRNA but is dispensable for terminal uridylyltransferase activity stretch occupies residues 601–869 (SSPSSLLSAK…IPQALKNLLK (269 aa)). 4 disordered regions span residues 640–689 (QGTK…DHSE), 735–757 (MKPEVAGEGSQGETGKEASHPSS), 775–796 (ARRRLQQQTKEEGRGGPTTGAE), and 803–822 (RVTQELKGPNSEQERPPGEP). Residues 671 to 689 (KSFEEGKEEPQGCAGDHSE) show a composition bias toward basic and acidic residues. Phosphoserine is present on residues Ser-688 and Ser-744.

It belongs to the DNA polymerase type-B-like family. In terms of assembly, associates with the cleavage and polyadenylation specificity factor (CPSF) complex. Interacts with CPSF1 and CPSF3; the interaction is direct. Interacts with PIP5K1A. It depends on Mg(2+) as a cofactor. Mn(2+) serves as cofactor. In terms of processing, phosphorylated by CK1 in the proline-rich (Pro-rich) region.

The protein resides in the nucleus. The protein localises to the nucleolus. Its subcellular location is the nucleus speckle. The enzyme catalyses RNA(n) + UTP = RNA(n)-3'-uridine ribonucleotide + diphosphate. The catalysed reaction is RNA(n) + ATP = RNA(n)-3'-adenine ribonucleotide + diphosphate. Adenylyltransferase activity is specifically phosphatidylinositol 4,5-bisphosphate (PtdIns(4,5)P2). Its function is as follows. Poly(A) polymerase that creates the 3'-poly(A) tail of specific pre-mRNAs. Localizes to nuclear speckles together with PIP5K1A and mediates polyadenylation of a select set of mRNAs, such as HMOX1. In addition to polyadenylation, it is also required for the 3'-end cleavage of pre-mRNAs: binds to the 3'UTR of targeted pre-mRNAs and promotes the recruitment and assembly of the CPSF complex on the 3'UTR of pre-mRNAs. In addition to adenylyltransferase activity, also has uridylyltransferase activity. However, the ATP ratio is higher than UTP in cells, suggesting that it functions primarily as a poly(A) polymerase. Acts as a specific terminal uridylyltransferase for U6 snRNA in vitro: responsible for a controlled elongation reaction that results in the restoration of the four 3'-terminal UMP-residues found in newly transcribed U6 snRNA. Not involved in replication-dependent histone mRNA degradation. The protein is Speckle targeted PIP5K1A-regulated poly(A) polymerase (Tut1) of Mus musculus (Mouse).